The sequence spans 320 residues: Foldase protein PrsA (320 aa).

An N-terminal signal peptide occupies residues 1–20 (MKMINKLIVPVTASALLLGA). C21 carries the N-palmitoyl cysteine lipid modification. C21 carries S-diacylglycerol cysteine lipidation. Positions 139–245 (EDSKKASHIL…FGYHIIKADK (107 aa)) constitute a PpiC domain. The interval 159 to 198 (EGLDDKEAKQKAEEIQKEVSKDPSKFGEIAKKESMDTGSA) is disordered.

The protein belongs to the PrsA family.

It is found in the cell membrane. The catalysed reaction is [protein]-peptidylproline (omega=180) = [protein]-peptidylproline (omega=0). Its function is as follows. Plays a major role in protein secretion by helping the post-translocational extracellular folding of several secreted proteins. The sequence is that of Foldase protein PrsA from Staphylococcus aureus (strain MRSA252).